An 80-amino-acid chain; its full sequence is 17 kDa surface antigen (80 aa).

Over residues 47–58 (ALETTPSGTSIE) the composition is skewed to polar residues. Positions 47–80 (ALETTPSGTSIEWRNPDNGNYGYVTPSKTYKNST) are disordered.

Belongs to the rickettsiale 17 kDa surface antigen family.

It localises to the cell outer membrane. This chain is 17 kDa surface antigen (omp), found in Rickettsia canadensis.